We begin with the raw amino-acid sequence, 119 residues long: cAMP-responsive element-binding protein-like 2 (119 aa).

Positions 1–23 are disordered; the sequence is MDDSKIVAGKVKKPGKRGRKPAK. Residues 10–21 are compositionally biased toward basic residues; the sequence is KVKKPGKRGRKP. A bZIP domain is found at 23–86; it reads KIDLKAKLER…LAMDQGKIPS (64 aa). Positions 29–60 are basic motif; the sequence is KLERSRQSARECRARKKLRYQYLEELVSSKER. Positions 62–69 are leucine-zipper; the sequence is ICALREEL. The segment at 95 to 119 is disordered; it reads DEQKTPQSCSNKTTKNSKYSSSSGI. The span at 102–119 shows a compositional bias: low complexity; sequence SCSNKTTKNSKYSSSSGI.

This sequence belongs to the bZIP family. ATF subfamily.

The protein localises to the nucleus. Its function is as follows. Probable regulator of creb1 transcriptional activity which is involved in adipose cells differentiation. May also play a regulatory role in the cell cycle. The protein is cAMP-responsive element-binding protein-like 2 (crebl2) of Danio rerio (Zebrafish).